A 693-amino-acid polypeptide reads, in one-letter code: Polyribonucleotide nucleotidyltransferase (693 aa).

Mg(2+) contacts are provided by aspartate 490 and aspartate 496. A KH domain is found at proline 557–isoleucine 617. The region spanning glycine 627–leucine 691 is the S1 motif domain.

It belongs to the polyribonucleotide nucleotidyltransferase family. Mg(2+) serves as cofactor.

Its subcellular location is the cytoplasm. The catalysed reaction is RNA(n+1) + phosphate = RNA(n) + a ribonucleoside 5'-diphosphate. Its function is as follows. Involved in mRNA degradation. Catalyzes the phosphorolysis of single-stranded polyribonucleotides processively in the 3'- to 5'-direction. The protein is Polyribonucleotide nucleotidyltransferase of Fervidobacterium nodosum (strain ATCC 35602 / DSM 5306 / Rt17-B1).